Here is a 558-residue protein sequence, read N- to C-terminus: Thermosome subunit alpha (558 aa).

A disordered region spans residues 536 to 558 (TEKGKKEGGEGAGAETPGAPSLE). A compositionally biased stretch (low complexity) spans 548–558 (GAETPGAPSLE).

Belongs to the TCP-1 chaperonin family. As to quaternary structure, forms a Heterooligomeric complex of two stacked eight-membered rings.

Functionally, molecular chaperone; binds unfolded polypeptides in vitro, and has a weak ATPase activity. This is Thermosome subunit alpha (thsA) from Sulfolobus acidocaldarius (strain ATCC 33909 / DSM 639 / JCM 8929 / NBRC 15157 / NCIMB 11770).